The primary structure comprises 517 residues: MIEVLIGLGAGVAGVGAGYLYAKKINDANYNIFLEQAKAKAKAIEYEAELTLKNSKISVQEAEFEAKKRYDDKTTKLQKEYSQKFDELNKKEQILLNEQELLNENKELFEKDRNEAKLTYEEGLNLKATYQSKVQEALKVLEHAAGLTEDEAREVVLKKVEEKSRADIAHIVRKHEEEAKREAKKRVNYILAQATSRFAGEFAAERLINVVNIKNDELKGRIIGKEGRNIKTLEMVLGVDIIIDDTPHAIILSSFNLYRRAIATRVIELLVEDGRIQPARIEDLHKKVTEEFEQSIQEEGENIVIDLGLSKIHPEITKLIGKLKFRASYGQNALAHSLEVAHLAGIIAAETGGDEKLAKRAGLLHDIGKALTHEFEGSHVDLGAEICKRYKEHPVVINAIYAHHGHEEATSIESAAVCAADCLSAARPGARREVLESFLKRVEEVENIAKSKDGIKQAYAINAGREIRVIANAKLINDDEAVLVAKEIAKEIEEKVQYPGEIKVSVIRETRAVDYAK.

A helical transmembrane segment spans residues 1 to 21; sequence MIEVLIGLGAGVAGVGAGYLY. Positions 207–273 constitute a KH domain; the sequence is LINVVNIKND…TRVIELLVED (67 aa). The HD domain maps to 333 to 426; it reads ALAHSLEVAH…VCAADCLSAA (94 aa).

It belongs to the RNase Y family.

The protein resides in the cell membrane. Its function is as follows. Endoribonuclease that initiates mRNA decay. In Campylobacter curvus (strain 525.92), this protein is Ribonuclease Y.